A 46-amino-acid chain; its full sequence is Large ribosomal subunit protein bL36A (46 aa).

It belongs to the bacterial ribosomal protein bL36 family.

The protein is Large ribosomal subunit protein bL36A of Sodalis glossinidius (strain morsitans).